We begin with the raw amino-acid sequence, 180 residues long: Ribulose bisphosphate carboxylase small subunit, chloroplastic 1 (180 aa).

The N-terminal 56 residues, 1-56 (MASSVLSSAAVATRSNVAQANMVAPFTGLKSAASFPVSRKQNLDITSIASNGGRVQ), are a transit peptide targeting the chloroplast.

The protein belongs to the RuBisCO small chain family. As to quaternary structure, heterohexadecamer of 8 large and 8 small subunits.

Its subcellular location is the plastid. The protein resides in the chloroplast. Functionally, ruBisCO catalyzes two reactions: the carboxylation of D-ribulose 1,5-bisphosphate, the primary event in carbon dioxide fixation, as well as the oxidative fragmentation of the pentose substrate. Both reactions occur simultaneously and in competition at the same active site. Although the small subunit is not catalytic it is essential for maximal activity. The protein is Ribulose bisphosphate carboxylase small subunit, chloroplastic 1 of Nicotiana sylvestris (Wood tobacco).